Reading from the N-terminus, the 140-residue chain is uncharacterized protein (140 aa).

It belongs to the SufE family.

This is an uncharacterized protein from Rhizobium meliloti (strain 1021) (Ensifer meliloti).